We begin with the raw amino-acid sequence, 176 residues long: Glutathione-regulated potassium-efflux system ancillary protein KefF (176 aa).

Residues His8, 14–17 (SHAN), 65–68 (MQWY), and 105–108 (TTGG) each bind FMN.

Belongs to the NAD(P)H dehydrogenase (quinone) family. KefF subfamily. As to quaternary structure, homodimer. Interacts with KefC. Requires FMN as cofactor.

Its subcellular location is the cell inner membrane. The catalysed reaction is a quinone + NADH + H(+) = a quinol + NAD(+). It carries out the reaction a quinone + NADPH + H(+) = a quinol + NADP(+). Functionally, regulatory subunit of a potassium efflux system that confers protection against electrophiles. Required for full activity of KefC. Shows redox enzymatic activity, but this enzymatic activity is not required for activation of KefC. This is Glutathione-regulated potassium-efflux system ancillary protein KefF from Salmonella gallinarum (strain 287/91 / NCTC 13346).